The following is a 557-amino-acid chain: Arginine--tRNA ligase (557 aa).

Positions 132-142 (ANPTGNLHLGH) match the 'HIGH' region motif.

It belongs to the class-I aminoacyl-tRNA synthetase family. In terms of assembly, monomer.

The protein resides in the cytoplasm. It carries out the reaction tRNA(Arg) + L-arginine + ATP = L-arginyl-tRNA(Arg) + AMP + diphosphate. This Geobacillus thermodenitrificans (strain NG80-2) protein is Arginine--tRNA ligase.